A 250-amino-acid polypeptide reads, in one-letter code: Sulfate transporter CysZ (250 aa).

The next 4 helical transmembrane spans lie at 27 to 47 (FVVLPLLANIILVGGAMYYLF), 64 to 84 (FLSWLSYVLWPLLALTILATF), 150 to 170 (FLLLLIPALGQTLGPIAWFLF), and 210 to 230 (MLVAFFTSIPIVNLFIVPVAV).

Belongs to the CysZ family.

The protein resides in the cell inner membrane. Functionally, high affinity, high specificity proton-dependent sulfate transporter, which mediates sulfate uptake. Provides the sulfur source for the cysteine synthesis pathway. This chain is Sulfate transporter CysZ, found in Vibrio cholerae serotype O1 (strain ATCC 39315 / El Tor Inaba N16961).